A 418-amino-acid polypeptide reads, in one-letter code: Beta-arrestin-1 (418 aa).

The tract at residues 1-163 (MGDKGTRVFK…LEEKIHKRNS (163 aa)) is interaction with SRC. An interaction with CHRM2 region spans residues 45 to 86 (PEYLKERRVYVTLTCAFRYGREDLDVLGLTFRKDLFVANVQS). Tyrosine 47 carries the post-translational modification Phosphotyrosine. 1D-myo-inositol hexakisphosphate contacts are provided by lysine 250, methionine 255, lysine 324, and lysine 326. Residues 318 to 418 (IVSYKVKVKL…GTGSPHLNNR (101 aa)) are interaction with TRAF6. Disordered regions lie at residues 353–374 (HPKP…PVDT) and 397–418 (KGMK…LNNR). Residues 355–366 (KPKEEPPHREVP) show a composition bias toward basic and acidic residues. Serine 412 carries the phosphoserine modification. Serine 412 carries the phosphoserine; by GRK5 modification.

This sequence belongs to the arrestin family. In terms of assembly, monomer. Homodimer. Homooligomer; the self-association is mediated by InsP6-binding. Heterooligomer with ARRB2; the association is mediated by InsP6-binding. Interacts with ADRB2 (phosphorylated). Interacts with CHRM2 (phosphorylated). Interacts with LHCGR. Interacts with CYTH2 and CASR. Interacts with AP2B1 (dephosphorylated at 'Tyr-737'); phosphorylation of AP2B1 at 'Tyr-737' disrupts the interaction. Interacts (dephosphorylated at Ser-412) with CLTC. Interacts with CCR2 and GRK2. Interacts with CRR5. Interacts with PTAFR (phosphorylated on serine residues). Interacts with CLTC and MAP2K3. Interacts with CREB1. Interacts with TRAF6. Interacts with IGF1R and MDM2. Interacts with C5AR1. Interacts with PDE4D. Interacts with SRC (via the SH3 domain and the protein kinase domain); the interaction is independent of the phosphorylation state of SRC C-terminus. Interacts with TACR1. Interacts with RAF1. Interacts with CHUK, IKBKB and MAP3K14. Interacts with DVL1; the interaction is enhanced by phosphorylation of DVL1. Interacts with DVL2; the interaction is enhanced by phosphorylation of DVL2. Interacts with IGF1R. Associates with MAP kinase p38. Part of a MAPK signaling complex consisting of TACR1, ARRB1, SRC, MAPK1 (activated) and MAPK3 (activated). Part of a MAPK signaling complex consisting of F2RL1, ARRB1, RAF1, MAPK1 (activated) and MAPK3 (activated). Interacts with GPR143. Interacts with MAP2K4/MKK4. Interacts with HCK and CXCR1 (phosphorylated). Interacts with ACKR3 and ACKR4. Interacts with ARRDC1; the interaction is direct. Interacts with GPR61, GPR62 and GPR135. In terms of processing, constitutively phosphorylated at Ser-412 in the cytoplasm. At the plasma membrane, is rapidly dephosphorylated, a process that is required for clathrin binding and beta-2 adrenergic receptor/ADRB2 endocytosis but not for ADRB2 binding and desensitization. Once internalized, is rephosphorylated. The ubiquitination status appears to regulate the formation and trafficking of beta-arrestin-GPCR complexes and signaling. Ubiquitination appears to occur GPCR-specific. Ubiquitinated by MDM2; the ubiquitination is required for rapid internalization of ADRB2. Deubiquitinated by USP33; the deubiquitination leads to a dissociation of the beta-arrestin-GPCR complex. Stimulation of a class A GPCR, such as ADRB2, induces transient ubiquitination and subsequently promotes association with USP33. As to expression, predominantly localized in neuronal tissues and in the spleen.

Its subcellular location is the cytoplasm. The protein resides in the nucleus. It localises to the cell membrane. The protein localises to the membrane. It is found in the clathrin-coated pit. Its subcellular location is the cell projection. The protein resides in the pseudopodium. It localises to the cytoplasmic vesicle. Functions in regulating agonist-mediated G-protein coupled receptor (GPCR) signaling by mediating both receptor desensitization and resensitization processes. During homologous desensitization, beta-arrestins bind to the GPRK-phosphorylated receptor and sterically preclude its coupling to the cognate G-protein; the binding appears to require additional receptor determinants exposed only in the active receptor conformation. The beta-arrestins target many receptors for internalization by acting as endocytic adapters (CLASPs, clathrin-associated sorting proteins) and recruiting the GPRCs to the adapter protein 2 complex 2 (AP-2) in clathrin-coated pits (CCPs). However, the extent of beta-arrestin involvement appears to vary significantly depending on the receptor, agonist and cell type. Internalized arrestin-receptor complexes traffic to intracellular endosomes, where they remain uncoupled from G-proteins. Two different modes of arrestin-mediated internalization occur. Class A receptors, like ADRB2, OPRM1, ENDRA, D1AR and ADRA1B dissociate from beta-arrestin at or near the plasma membrane and undergo rapid recycling. Class B receptors, like AVPR2, AGTR1, NTSR1, TRHR and TACR1 internalize as a complex with arrestin and traffic with it to endosomal vesicles, presumably as desensitized receptors, for extended periods of time. Receptor resensitization then requires that receptor-bound arrestin is removed so that the receptor can be dephosphorylated and returned to the plasma membrane. Involved in internalization of P2RY4 and UTP-stimulated internalization of P2RY2. Involved in phosphorylation-dependent internalization of OPRD1 ands subsequent recycling. Involved in the degradation of cAMP by recruiting cAMP phosphodiesterases to ligand-activated receptors. Beta-arrestins function as multivalent adapter proteins that can switch the GPCR from a G-protein signaling mode that transmits short-lived signals from the plasma membrane via small molecule second messengers and ion channels to a beta-arrestin signaling mode that transmits a distinct set of signals that are initiated as the receptor internalizes and transits the intracellular compartment. Acts as a signaling scaffold for MAPK pathways such as MAPK1/3 (ERK1/2). ERK1/2 activated by the beta-arrestin scaffold is largely excluded from the nucleus and confined to cytoplasmic locations such as endocytic vesicles, also called beta-arrestin signalosomes. Recruits c-Src/SRC to ADRB2 resulting in ERK activation. GPCRs for which the beta-arrestin-mediated signaling relies on both ARRB1 and ARRB2 (codependent regulation) include ADRB2, F2RL1 and PTH1R. For some GPCRs the beta-arrestin-mediated signaling relies on either ARRB1 or ARRB2 and is inhibited by the other respective beta-arrestin form (reciprocal regulation). Inhibits ERK1/2 signaling in AGTR1- and AVPR2-mediated activation (reciprocal regulation). Is required for SP-stimulated endocytosis of NK1R and recruits c-Src/SRC to internalized NK1R resulting in ERK1/2 activation, which is required for the antiapoptotic effects of SP. Is involved in proteinase-activated F2RL1-mediated ERK activity. Acts as a signaling scaffold for the AKT1 pathway. Is involved in alpha-thrombin-stimulated AKT1 signaling. Is involved in IGF1-stimulated AKT1 signaling leading to increased protection from apoptosis. Involved in activation of the p38 MAPK signaling pathway and in actin bundle formation. Involved in F2RL1-mediated cytoskeletal rearrangement and chemotaxis. Involved in AGTR1-mediated stress fiber formation by acting together with GNAQ to activate RHOA. Appears to function as signaling scaffold involved in regulation of MIP-1-beta-stimulated CCR5-dependent chemotaxis. Involved in attenuation of NF-kappa-B-dependent transcription in response to GPCR or cytokine stimulation by interacting with and stabilizing CHUK. May serve as nuclear messenger for GPCRs. Involved in OPRD1-stimulated transcriptional regulation by translocating to CDKN1B and FOS promoter regions and recruiting EP300 resulting in acetylation of histone H4. Involved in regulation of LEF1 transcriptional activity via interaction with DVL1 and/or DVL2 Also involved in regulation of receptors other than GPCRs. Involved in Toll-like receptor and IL-1 receptor signaling through the interaction with TRAF6 which prevents TRAF6 autoubiquitination and oligomerization required for activation of NF-kappa-B and JUN. Binds phosphoinositides. Binds inositolhexakisphosphate (InsP6). Involved in IL8-mediated granule release in neutrophils. Required for atypical chemokine receptor ACKR2-induced RAC1-LIMK1-PAK1-dependent phosphorylation of cofilin (CFL1) and for the up-regulation of ACKR2 from endosomal compartment to cell membrane, increasing its efficiency in chemokine uptake and degradation. Involved in the internalization of the atypical chemokine receptor ACKR3. Negatively regulates the NOTCH signaling pathway by mediating the ubiquitination and degradation of NOTCH1 by ITCH. Participates in the recruitment of the ubiquitin-protein ligase to the receptor. In Rattus norvegicus (Rat), this protein is Beta-arrestin-1.